The chain runs to 148 residues: Transcription antitermination protein NusB (148 aa).

This sequence belongs to the NusB family.

Functionally, involved in transcription antitermination. Required for transcription of ribosomal RNA (rRNA) genes. Binds specifically to the boxA antiterminator sequence of the ribosomal RNA (rrn) operons. The chain is Transcription antitermination protein NusB from Aquifex aeolicus (strain VF5).